The chain runs to 250 residues: NAD(P)H-quinone oxidoreductase subunit K (250 aa).

[4Fe-4S] cluster-binding residues include C60, C61, C125, and C156. Residues 230–250 are disordered; it reads ELNTSEIDASPASQPSSTYES. Polar residues predominate over residues 231 to 250; it reads LNTSEIDASPASQPSSTYES.

The protein belongs to the complex I 20 kDa subunit family. In terms of assembly, NDH-1 can be composed of about 15 different subunits; different subcomplexes with different compositions have been identified which probably have different functions. The cofactor is [4Fe-4S] cluster.

It is found in the cellular thylakoid membrane. The catalysed reaction is a plastoquinone + NADH + (n+1) H(+)(in) = a plastoquinol + NAD(+) + n H(+)(out). It catalyses the reaction a plastoquinone + NADPH + (n+1) H(+)(in) = a plastoquinol + NADP(+) + n H(+)(out). Functionally, NDH-1 shuttles electrons from an unknown electron donor, via FMN and iron-sulfur (Fe-S) centers, to quinones in the respiratory and/or the photosynthetic chain. The immediate electron acceptor for the enzyme in this species is believed to be plastoquinone. Couples the redox reaction to proton translocation, and thus conserves the redox energy in a proton gradient. Cyanobacterial NDH-1 also plays a role in inorganic carbon-concentration. This chain is NAD(P)H-quinone oxidoreductase subunit K, found in Prochlorococcus marinus (strain MIT 9303).